Here is an 85-residue protein sequence, read N- to C-terminus: RDS3 complex subunit 10 (85 aa).

Belongs to the SF3b complex composed of CUS1, HSH49, HSH155, RCP1, RDS3 and RSE1.

It is found in the nucleus. In terms of biological role, involved in pre-mRNA splicing. Required for the SF3b integrity and prespliceosome assembly. This chain is RDS3 complex subunit 10 (YSF3), found in Saccharomyces cerevisiae (strain ATCC 204508 / S288c) (Baker's yeast).